A 429-amino-acid chain; its full sequence is uncharacterized protein (429 aa).

Helical transmembrane passes span 27 to 47 (PFFFLFCLFIPFDNTSLQSIG), 48 to 68 (GIMTASPSALILLPGLFVSIL), 78 to 98 (ILLCFFGVLLISFLYYFYWVF), 106 to 126 (IFILDRGSRYFLLYVFYFLAL), 142 to 162 (ALIIIVVIFSVLLNYLDPAII), 198 to 218 (LLLAVLLNWSTFFLVTVTIVI), 219 to 239 (AILTTSKGAALSFLICICFYF), 249 to 269 (VLLSLCSIVISYIIFKYYFLD), 288 to 308 (FIVGLKIFLFNPLGVGFFGYL), 351 to 371 (LILDLLIIYGVFFLIPFIYFI), and 399 to 419 (FFISHLGSYFTPFCIAFLIIL).

It localises to the cell membrane. In terms of biological role, may function as a transporter. This is an uncharacterized protein from Klebsiella pneumoniae.